The chain runs to 44 residues: Large ribosomal subunit protein bL34 (44 aa).

It belongs to the bacterial ribosomal protein bL34 family.

This Ehrlichia ruminantium (strain Gardel) protein is Large ribosomal subunit protein bL34.